The chain runs to 401 residues: Probable 2,3-bisphosphoglycerate-independent phosphoglycerate mutase (401 aa).

This sequence belongs to the BPG-independent phosphoglycerate mutase family. A-PGAM subfamily.

It carries out the reaction (2R)-2-phosphoglycerate = (2R)-3-phosphoglycerate. The protein operates within carbohydrate degradation; glycolysis; pyruvate from D-glyceraldehyde 3-phosphate: step 3/5. Functionally, catalyzes the interconversion of 2-phosphoglycerate and 3-phosphoglycerate. This chain is Probable 2,3-bisphosphoglycerate-independent phosphoglycerate mutase, found in Thermotoga maritima (strain ATCC 43589 / DSM 3109 / JCM 10099 / NBRC 100826 / MSB8).